Reading from the N-terminus, the 221-residue chain is NIP3 homolog (221 aa).

Residues 24–55 are disordered; sequence GEKTDESVQPQQQTEQSSAQQTTPSAKAVSNP. Lys26 is covalently cross-linked (Glycyl lysine isopeptide (Lys-Gly) (interchain with G-Cter in ubiquitin)). Low complexity predominate over residues 32-49; the sequence is QPQQQTEQSSAQQTTPSA. The helical transmembrane segment at 189 to 209 threads the bilayer; it reads VVFGFLVTNIFSFVVGAAVGF. A required for initiation of apoptosis region spans residues 189 to 209; the sequence is VVFGFLVTNIFSFVVGAAVGF.

Belongs to the NIP3 family. As to quaternary structure, homodimer; via transmembrane domain. Interacts with ced-3 and ced-9. Post-translationally, ubiquitinated and degraded by the proteasome. Under oxidative stress conditions, ubiquitinated at Lys-26 in a pink-1 dependent manner. Colocalizes with pdr-1 and may be ubiquitinated by it. As to expression, expressed in all somatic tissues including neurons, pharynx, intestine, body wall muscles and vulva muscles.

The protein localises to the mitochondrion outer membrane. Initiates apoptosis in a BH3-independent mechanism possibly by recruiting ced-3 to mitochondria and other cytoplasmic membranes. Has a role in lifespan and tumor growth. Required for the induction of mitophagy under stress conditions. The protein is NIP3 homolog of Caenorhabditis elegans.